The primary structure comprises 729 residues: Serine/threonine-protein kinase TBK1 (729 aa).

One can recognise a Protein kinase domain in the interval W9–V310. L15 to V23 is an ATP binding site. A Glycyl lysine isopeptide (Lys-Gly) (interchain with G-Cter in ubiquitin) cross-link involves residue K30. An ATP-binding site is contributed by K38. The active-site Proton acceptor is D135. At S172 the chain carries Phosphoserine; by autocatalysis and IKKB. The Ubiquitin-like domain occupies M309–E385. A Glycyl lysine isopeptide (Lys-Gly) (interchain with G-Cter in ubiquitin) cross-link involves residue K401. Coiled-coil stretches lie at residues D407–T657 and L658–R713. K607 bears the N6-methyllysine; by SETD4 mark. The tract at residues R621 to L729 is interaction with AZI2, TANK and TBKBP1. Residue K670 forms a Glycyl lysine isopeptide (Lys-Gly) (interchain with G-Cter in ubiquitin) linkage. A Phosphoserine modification is found at S716.

This sequence belongs to the protein kinase superfamily. Ser/Thr protein kinase family. I-kappa-B kinase subfamily. Homodimer. Interacts with DDX3X, TIRAP and TRAF2. Part of a ternary complex consisting of TANK, TRAF2 and TBK1. Interacts with AZI2, TANK and TBKBP1; these interactions are mutually exclusive and mediate TBK1 activation. Interacts with GSK3B; this interaction promotes TBK1 self-association and autophosphorylation. Interacts with SIKE1; SIKE1 is associated with TBK1 under physiological condition and dissociated from TBK1 upon viral infection or TLR3 stimulation. Interacts with IRF3, leading to IRF3 phosphorylation. Interacts with RIGI. Interacts with CYLD. Interacts with OPTN and TRAF3. Interacts with SRC. Interacts with the exocyst complex subunit SEC5/EXOC2; this interaction is sufficient to trigger TBK1 activity. Interacts with STING1, leading to STING1 phosphorylation. Interacts with IFIT3 (via N-terminus). Interacts with MAVS; interaction only takes place in the presence of IFIT3 and leads to MAVS phosphorylation. Interacts (via protein kinase domain) with TTLL12 (via TTL domain); the interaction prevents MAVS binding to TBK1. Interacts with TICAM1; this interaction is enhanced in the presence of WDFY1 and leads to TICAM1 phosphorylation. Interacts with TRIM26. Interacts with TRIM23. Interacts with TTC4 and IKBKE. Interacts with HNRNPA2B1. Interacts with DDX3X. Interacts with TRIM14. Interacts with CEP170; efficient complex formation may be dependent on the presence of CCDC61. Interacts with TRAF3IP3. Interacts with HSP90AA1; the interaction mediates TBK1 association with TOMM70. Interacts with TAX1BP1. Interacts with kinase IKBKB; the complex interacts with STAT1, leading to phosphorylation of STAT1 on 'Thr-749' by IKBKB. Interacts with ICOS; this interaction is critical for the maturation of T follicular regulatory cells. Interacts with RNF144B; this interaction prevents TBK1 phosphorylation and subsequent activation. Interacts with ASB8; this interaction promotes TBK1 proteasomal degradation. Forms a ternary complex with ZNF268 and SETD4; the interaction with SETD4 is ZNF268-dependent and leads to TBK1 monomethylation, which enhances its interaction with IRF3 and MAVS. In terms of assembly, (Microbial infection) Interacts with Borna disease virus (BDV) P protein leading to its phosphorylation. As to quaternary structure, (Microbial infection) Interacts with Ebola virus protein VP35. (Microbial infection) Interacts with HCV NS3; this interaction leads to inhibition of cellular antiviral response by blocking necessary interactions between the TBK1 and its substrates IRF3 and IRF7. In terms of assembly, (Microbial infection) Interacts with human herpesvirus 1 protein ICP34.5. As to quaternary structure, (Microbial infection) Interacts with Zika virus non-structural protein 1/NS1 and non-structural protein 4B/NS4B. (Microbial infection) Interacts with SARS-CoV-2 non-structural protein 6; this interaction decreases IRF3 phosphorylation by 57%, which leads to reduced IFN-beta (IFNB) production. Interacts with SARS-CoV-2 helicase; this interaction inhibits TBK1 phosphorylation and decreases IRF3 phosphorylation by 75%, which leads to reduced IFN-beta production. Interacts with SARS-CoV-2 M protein; the interaction promotes TBK1 degradation via 'Lys-48'-linked ubiquitination. In terms of assembly, (Microbial infection) Interacts with human cytomegalovirus protein UL35; this interaction inhibits type I interferon production. As to quaternary structure, (Microbial infection) Interacts with heartland virus NSs; this interaction antagonizes TBK1 phosphorylation and inhibits TBK1-IRF3 interaction and thus the establishment of an antiviral state. (Microbial infection) Interacts (via N-terminus) with Severe fever with thrombocytopenia virus (SFTSV) NSs; this interaction antagonizes TBK1 phosphorylation and sequesters TBK1 in NSs-induced cytoplasmic inclusion bodies thereby inhibiting the IFN responses. Post-translationally, autophosphorylation at Ser-172 activates the kinase, and is an essential step for virus-triggered signaling. Phosphorylated by IKBKB/IKKB at Ser-172. Phosphorylation requires homodimerization and ubiquitination at Lys-30 and Lys-401. Dephosphorylated at Ser-172 by PPM1B and this negatively regulates its role in mediating antiviral response. In terms of processing, 'Lys-63'-linked polyubiquitination by MIB1 after RNA virus infection, or by NRDP1 after LPS stimulation at Lys-30 and Lys-401, participates in kinase activation. 'Lys-48'-linked polyubiquitination at Lys-670 by DTX4 leads to proteasomal degradation. 'Lys-48'-linked polyubiquitination by TRAIP also leads to proteasomal degradation. 'Lys-48'-linked polyubiquitination by TRAF7; leading to proteasomal degradation. 'Lys-63'-linked polyubiquitination by RNF128 at Lys-30 and Lys-401 leads to the activation of antiviral responses. 'Lys-48'-linked polyubiquitination after 'lys-33'-linked deubiquitination by USP38 promotes TBK1 degradation. (Microbial infection) Interaction with SARS-CoV-2 M protein induces 'Lys-48'-linked ubiquitination which leads to proteasomal degradation. Post-translationally, (Microbial infection) Deubiquitinated by Epstein-Barr virus BPLF1 on both 'Lys-48' and 'Lys-63'-linked ubiquitin chains; leading to inhibition of type I interfewron production. In terms of processing, monomethylation at Lys-607 by SETD4 maximizes TBK1 activation and promotes efficient interferon signaling. As to expression, ubiquitous with higher expression in testis. Expressed in the ganglion cells, nerve fiber layer and microvasculature of the retina.

The protein localises to the cytoplasm. The enzyme catalyses L-seryl-[protein] + ATP = O-phospho-L-seryl-[protein] + ADP + H(+). It carries out the reaction L-threonyl-[protein] + ATP = O-phospho-L-threonyl-[protein] + ADP + H(+). In terms of biological role, serine/threonine kinase that plays an essential role in regulating inflammatory responses to foreign agents. Following activation of toll-like receptors by viral or bacterial components, associates with TRAF3 and TANK and phosphorylates interferon regulatory factors (IRFs) IRF3 and IRF7 as well as DDX3X. This activity allows subsequent homodimerization and nuclear translocation of the IRFs leading to transcriptional activation of pro-inflammatory and antiviral genes including IFNA and IFNB. In order to establish such an antiviral state, TBK1 form several different complexes whose composition depends on the type of cell and cellular stimuli. Plays a key role in IRF3 activation: acts by first phosphorylating innate adapter proteins MAVS, STING1 and TICAM1 on their pLxIS motif, leading to recruitment of IRF3, thereby licensing IRF3 for phosphorylation by TBK1. Phosphorylated IRF3 dissociates from the adapter proteins, dimerizes, and then enters the nucleus to induce expression of interferons. Thus, several scaffolding molecules including FADD, TRADD, MAVS, AZI2, TANK or TBKBP1/SINTBAD can be recruited to the TBK1-containing-complexes. Under particular conditions, functions as a NF-kappa-B effector by phosphorylating NF-kappa-B inhibitor alpha/NFKBIA, IKBKB or RELA to translocate NF-Kappa-B to the nucleus. Restricts bacterial proliferation by phosphorylating the autophagy receptor OPTN/Optineurin on 'Ser-177', thus enhancing LC3 binding affinity and antibacterial autophagy. Phosphorylates SMCR8 component of the C9orf72-SMCR8 complex, promoting autophagosome maturation. Phosphorylates ATG8 proteins MAP1LC3C and GABARAPL2, thereby preventing their delipidation and premature removal from nascent autophagosomes. Seems to play a role in energy balance regulation by sustaining a state of chronic, low-grade inflammation in obesity, which leads to a negative impact on insulin sensitivity. Attenuates retroviral budding by phosphorylating the endosomal sorting complex required for transport-I (ESCRT-I) subunit VPS37C. Phosphorylates Borna disease virus (BDV) P protein. Plays an essential role in the TLR3- and IFN-dependent control of herpes virus HSV-1 and HSV-2 infections in the central nervous system. Acts both as a positive and negative regulator of the mTORC1 complex, depending on the context: activates mTORC1 in response to growth factors by catalyzing phosphorylation of MTOR, while it limits the mTORC1 complex by promoting phosphorylation of RPTOR. Acts as a positive regulator of the mTORC2 complex by mediating phosphorylation of MTOR, leading to increased phosphorylation and activation of AKT1. Phosphorylates and activates AKT1. Involved in the regulation of TNF-induced RIPK1-mediated cell death, probably acting via CYLD phosphorylation that in turn controls RIPK1 ubiquitination status. Also participates in the differentiation of T follicular regulatory cells together with the receptor ICOS. The protein is Serine/threonine-protein kinase TBK1 of Homo sapiens (Human).